Reading from the N-terminus, the 94-residue chain is Ferredoxin-like protein (94 aa).

2 consecutive 4Fe-4S ferredoxin-type domains span residues 20–52 and 53–83; these read PHIR…RETN and GKVT…WEWP.

The protein to ferredoxins from P.putida and C.tartarivorum, ferredoxin I from A.vinelandii, ferredoxin II from D.desulfuricans.

Could be a 3Fe-4S cluster-containing protein. The polypeptide is Ferredoxin-like protein (fixX) (Azotobacter vinelandii).